The primary structure comprises 185 residues: Ribosome-recycling factor (185 aa).

Belongs to the RRF family.

The protein resides in the cytoplasm. Functionally, responsible for the release of ribosomes from messenger RNA at the termination of protein biosynthesis. May increase the efficiency of translation by recycling ribosomes from one round of translation to another. This Histophilus somni (strain 2336) (Haemophilus somnus) protein is Ribosome-recycling factor.